The primary structure comprises 375 residues: tRNA-specific 2-thiouridylase MnmA (375 aa).

ATP is bound by residues Gly18 to Ser25 and Met44. The interval Asn104–Asp106 is interaction with target base in tRNA. The active-site Nucleophile is the Cys109. A disulfide bridge connects residues Cys109 and Cys206. Gly134 provides a ligand contact to ATP. The interaction with tRNA stretch occupies residues Lys156–Gln158. Cys206 serves as the catalytic Cysteine persulfide intermediate. Positions Arg318 to Tyr319 are interaction with tRNA.

Belongs to the MnmA/TRMU family.

The protein localises to the cytoplasm. It carries out the reaction S-sulfanyl-L-cysteinyl-[protein] + uridine(34) in tRNA + AH2 + ATP = 2-thiouridine(34) in tRNA + L-cysteinyl-[protein] + A + AMP + diphosphate + H(+). In terms of biological role, catalyzes the 2-thiolation of uridine at the wobble position (U34) of tRNA, leading to the formation of s(2)U34. The chain is tRNA-specific 2-thiouridylase MnmA from Colwellia psychrerythraea (strain 34H / ATCC BAA-681) (Vibrio psychroerythus).